A 511-amino-acid chain; its full sequence is Acetylcholine receptor subunit alpha-type unc-38 (511 aa).

Residues 1 to 16 (MRSFWLFLLLLLFCIS) form the signal peptide. Topologically, residues 17–261 (FIKLTEGNED…QLRRKPLFYT (245 aa)) are extracellular. Residue Asn-124 is glycosylated (N-linked (GlcNAc...) asparagine). An intrachain disulfide couples Cys-151 to Cys-165. A glycan (N-linked (GlcNAc...) asparagine) is linked at Asn-202. A disulfide bridge links Cys-238 with Cys-239. Helical transmembrane passes span 262-282 (VNLVFPCVGISFLTILVFYLP), 291-311 (LCISILVALTIFFLLLTEIIP), and 324-344 (LLFTMVMVTLSVVVTVISLNL). The Cytoplasmic portion of the chain corresponds to 345-464 (HFRTPTTHLM…WKYVAMVLDR (120 aa)). Residues 465–485 (LFLLIFSIACFVGTVIILLRA) form a helical membrane-spanning segment.

This sequence belongs to the ligand-gated ion channel (TC 1.A.9) family. Acetylcholine receptor (TC 1.A.9.1) subfamily. In terms of assembly, component of nicotinic acetylcholine receptor. In muscles, composed of 2 non-alpha subunits lev-1 and unc-29, and 3 alpha subunits unc-38, unc-63 and lev-8. In cholinergic motoneurons, composed of 2 non-alpha subunits acr-2 and acr-3, and 3 alpha subunits unc-38, unc-63 and acr-12.

It is found in the postsynaptic cell membrane. The protein resides in the cell membrane. Alpha subunit of nicotinic acetylcholine receptor (nAChR). Probably acts in cholinergic motoneurons to regulate presynaptic neurotransmitter release, thereby ensuring normal level of excitation of cholinergic motoneurons during locomotion. Involved in nAChR sensitivity to nicotine. The sequence is that of Acetylcholine receptor subunit alpha-type unc-38 (unc-38) from Caenorhabditis elegans.